The sequence spans 188 residues: dCTP deaminase (188 aa).

DCTP contacts are provided by residues lysine 111–arginine 116, threonine 135–glutamate 137, glutamine 156, tyrosine 170, and glutamine 180. Catalysis depends on glutamate 137, which acts as the Proton donor/acceptor.

Belongs to the dCTP deaminase family. In terms of assembly, homotrimer.

The enzyme catalyses dCTP + H2O + H(+) = dUTP + NH4(+). It functions in the pathway pyrimidine metabolism; dUMP biosynthesis; dUMP from dCTP (dUTP route): step 1/2. Catalyzes the deamination of dCTP to dUTP. The chain is dCTP deaminase from Methylococcus capsulatus (strain ATCC 33009 / NCIMB 11132 / Bath).